A 314-amino-acid chain; its full sequence is Nodulation protein D 1 (314 aa).

Residues Leu-6–Thr-63 enclose the HTH lysR-type domain. Positions Leu-23–Ala-42 form a DNA-binding region, H-T-H motif.

It belongs to the LysR transcriptional regulatory family.

Functionally, nodD regulates the expression of the nodABCFE genes which encode other nodulation proteins. NodD is also a negative regulator of its own expression. Binds flavonoids as inducers. This is Nodulation protein D 1 (nodD1) from Bradyrhizobium sp. (strain NC92).